The following is a 186-amino-acid chain: Superoxide dismutase [Cu-Zn] (186 aa).

The signal sequence occupies residues 1–22 (MNMKTLLALAVSAVCSVSVAQA). Residues H79, H81, and H104 each coordinate Cu cation. An intrachain disulfide couples C86 to C182. Residues H104, H113, H122, and D125 each contribute to the Zn(2+) site. Position 160 (H160) interacts with Cu cation.

The protein belongs to the Cu-Zn superoxide dismutase family. In terms of assembly, homodimer. Cu cation serves as cofactor. Requires Zn(2+) as cofactor.

It localises to the periplasm. The enzyme catalyses 2 superoxide + 2 H(+) = H2O2 + O2. Functionally, destroys radicals which are normally produced within the cells and which are toxic to biological systems. The sequence is that of Superoxide dismutase [Cu-Zn] (sodC) from Neisseria meningitidis serogroup A / serotype 4A (strain DSM 15465 / Z2491).